Here is a 581-residue protein sequence, read N- to C-terminus: MAMSSLRRLVSLLRSQNDLIDIFAPVDPYLELPEIHRRVIENQGPALLFHNVQGASFPVLTNLFGTQKRVDQIFSKVPKGLIPQVIHLLSSPPKLSQLWKHRNLLLRGLSLGLRKARFLKFPHKKMASVDLHQLPMLTSWPEDGGAFLTLPLVYTESPSSKIPNLGMYRMQRFDRDTLGLHFQIQKGGGMHFYEAEQKNENLPVTVFLSGNPFLILSAIAPLPENISELLLCTFLQGSKLHYKNDPDTPHPLLYDSEFILIGEGICNERRPEGPFGDHFGYYSLQHDFPAFKCRKIYHRKDAIYPATIVGKPYQEDFYLGNKLQEYLSPLFPMVMPGVRQLKSYGEAGFHALTGAVVKERYWKESLATSLRILGEGQLSLTKFLMITDHHVDLDNFPKLLETILSRIVPERDLIIFSETSNDTLDYTGPKLNKGSKAIFMGIGPAIRDLPHKYRGKSLPNITNMGTFCPGCLVLETTLQQVNIDALLNHPDLSSWPLVVLTENLNETLASSKDFLWKTFTRLAPATDLHVRFSNVAHHRPNYTFPILLNSLMKPHYPKEVEADETTIQKVSHRWNEYFPKY.

It belongs to the UbiD family.

This is an uncharacterized protein from Chlamydia caviae (strain ATCC VR-813 / DSM 19441 / 03DC25 / GPIC) (Chlamydophila caviae).